Consider the following 198-residue polypeptide: Probable chorismate pyruvate-lyase (198 aa).

Residues Arg73, Leu111, and Glu172 each contribute to the substrate site.

This sequence belongs to the UbiC family.

It is found in the cytoplasm. The enzyme catalyses chorismate = 4-hydroxybenzoate + pyruvate. It participates in cofactor biosynthesis; ubiquinone biosynthesis. Functionally, removes the pyruvyl group from chorismate, with concomitant aromatization of the ring, to provide 4-hydroxybenzoate (4HB) for the ubiquinone pathway. The sequence is that of Probable chorismate pyruvate-lyase from Burkholderia orbicola (strain AU 1054).